The primary structure comprises 80 residues: Moroidotoxin A (80 aa).

Positions 1–27 are cleaved as a signal peptide; sequence MAAVKKHLRFALVAAITIALLVAGSVA. Positions 28 to 44 are excised as a propeptide; it reads DESSEDIDNIVIKTPLD. 3 disulfides stabilise this stretch: cysteine 48–cysteine 65, cysteine 53–cysteine 67, and cysteine 61–cysteine 76.

Belongs to the gympietide family. Expressed in trichomes, that are stiff epidermal hairs located on the surface of petioles and leaves. Not expressed in other aerial parts.

The protein resides in the secreted. Neurotoxin certainly responsible for the defensive, persistent, and painful stings of the giant stinging tree. Inhibits inactivation of Nav1.7/SCN9A sodium channel in sensory neurons by directly interacting with TMEM233, a newly described Nav-interacting protein. Has virtually no effect on Nav1.7/SCN9A function in heterologous expression systems and in neurons that do not express TMEM233. Also weakly but significantly affects Nav1.8/SCN10A. Coexpression of TMEM233 with Nav also confers ExTxA sensitivity to Nav1.1-Nav1.6. On the Nav1.7/SCN9A channel, causes a significant hyperpolarizing shift in the voltage dependence of activation. Its effects on Nav currents are irreversible, with no apparent reduction in activity even after repeated wash steps over 30 minutes. In vivo, induces nocifensive behavior in mice (licking or biting and shaking or lifting of the affected paw) lasting for approximately 1 hour. The sequence is that of Moroidotoxin A from Dendrocnide moroides (Gympie stinging tree).